Consider the following 398-residue polypeptide: MEGAALLRVSVLCIWMSALFLGVGVRAEEAGARVQQNVPSGTDTGDPQSKPLGDWAAGTMDPESSIFIEDAIKYFKEKVSTQNLLLLLTDNEAWNGFVAAAELPRNEADELRKALDNLARQMIMKDKNWHDKGQQYRNWFLKEFPRLKSELEDNIRRLRALADGVQKVHKGTTIANVVSGSLSISSGILTLVGMGLAPFTEGGSLVLLEPGMELGITAALTGITSSTMDYGKKWWTQAQAHDLVIKSLDKLKEVREFLGENISNFLSLAGNTYQLTRGIGKDIRALRRARANLQSVPHASASRPRVTEPISAESGEQVERVNEPSILEMSRGVKLTDVAPVSFFLVLDVVYLVYESKHLHEGAKSETAEELKKVAQELEEKLNILNNNYKILQADQEL.

A signal peptide spans 1-27 (MEGAALLRVSVLCIWMSALFLGVGVRA). The segment covering 35 to 47 (QQNVPSGTDTGDP) has biased composition (polar residues). Positions 35 to 55 (QQNVPSGTDTGDPQSKPLGDW) are disordered. Residue asparagine 261 is glycosylated (N-linked (GlcNAc...) asparagine). The segment at 297–317 (PHASASRPRVTEPISAESGEQ) is disordered. Serine 311 and serine 314 each carry phosphoserine; by FAM20C.

This sequence belongs to the apolipoprotein L family. In plasma, interacts with APOA1 and mainly associated with large high density lipoprotein particles. Phosphorylated by FAM20C in the extracellular medium. As to expression, plasma. Found on APOA-I-containing high density lipoprotein (HDL3). Expressed in pancreas, lung, prostate, liver, placenta and spleen.

It is found in the secreted. Its function is as follows. May play a role in lipid exchange and transport throughout the body. May participate in reverse cholesterol transport from peripheral cells to the liver. The chain is Apolipoprotein L1 (APOL1) from Homo sapiens (Human).